A 318-amino-acid polypeptide reads, in one-letter code: 5'-3' exonuclease (318 aa).

The 85-residue stretch at 194–278 (AYAELALLRG…ATDAPVTLST (85 aa)) folds into the 5'-3' exonuclease domain.

Its function is as follows. 5'-3' exonuclease acting preferentially on double-stranded DNA. The protein is 5'-3' exonuclease of Mycobacterium tuberculosis (strain ATCC 25618 / H37Rv).